The chain runs to 128 residues: Fluoride-specific ion channel FluC (128 aa).

The next 4 helical transmembrane spans lie at 5–25, 35–55, 67–87, and 96–116; these read IVAI…LSLA, LGTL…AVVF, LFVI…SVEV, and FGWA…LTAL. 2 residues coordinate Na(+): Gly75 and Thr78.

It belongs to the fluoride channel Fluc/FEX (TC 1.A.43) family.

It localises to the cell inner membrane. It carries out the reaction fluoride(in) = fluoride(out). Na(+) is not transported, but it plays an essential structural role and its presence is essential for fluoride channel function. Functionally, fluoride-specific ion channel. Important for reducing fluoride concentration in the cell, thus reducing its toxicity. The chain is Fluoride-specific ion channel FluC from Burkholderia lata (strain ATCC 17760 / DSM 23089 / LMG 22485 / NCIMB 9086 / R18194 / 383).